A 778-amino-acid polypeptide reads, in one-letter code: Actin-binding LIM protein 1 (778 aa).

LIM zinc-binding domains are found at residues 97-156, 156-216, 224-283, and 283-343; these read IHCH…MYGT, TRCH…MSSS, SNCA…LFGV, and VKCE…TKTE. At serine 216 the chain carries Phosphoserine. The tract at residues 339–370 is disordered; that stretch reads STKTEEKLRPTRTSSESIYSRPGSSIPGSPGH. Residues 360–369 are compositionally biased toward low complexity; that stretch reads PGSSIPGSPG. Position 367 is a phosphoserine (serine 367). Phosphotyrosine occurs at positions 373 and 396. Disordered regions lie at residues 414 to 510 and 552 to 597; these read YDDK…QAPK and AAQA…EELL. Residues serine 422, serine 426, and serine 431 each carry the phosphoserine modification. The segment covering 423–434 has biased composition (polar residues); sequence LGESPRTLSPTP. Threonine 433 carries the post-translational modification Phosphothreonine. The residue at position 435 (serine 435) is a Phosphoserine. Tyrosine 439 bears the Phosphotyrosine mark. Residues 449 to 474 show a composition bias toward polar residues; that stretch reads RSTSQGSINSPVYSRHSYTPTTSRSP. 5 positions are modified to phosphoserine: serine 452, serine 455, serine 458, serine 498, and serine 587. The stretch at 590–614 forms a coiled coil; sequence EEDDEELLRRRQLQEEQLMKLNSGL. Residue lysine 620 forms a Glycyl lysine isopeptide (Lys-Gly) (interchain with G-Cter in SUMO2) linkage. 4 positions are modified to phosphoserine: serine 640, serine 655, serine 677, and serine 706. The 69-residue stretch at 710–778 folds into the HP domain; that stretch reads MLEPKIFPYE…NDMKKKAKLF (69 aa).

As to quaternary structure, binds F-actin. Interacts with ABRA. In terms of tissue distribution, detected in liver, heart, skeletal muscle, brain and retina, where it is concentrated in the inner segment and in the outer plexiform layers.

Its subcellular location is the cytoplasm. It is found in the cytoskeleton. Functionally, may act as scaffold protein. May play a role in the development of the retina. Has been suggested to play a role in axon guidance. The protein is Actin-binding LIM protein 1 (ABLIM1) of Homo sapiens (Human).